A 274-amino-acid chain; its full sequence is NH(3)-dependent NAD(+) synthetase (274 aa).

46-53 (GISGGQDS) provides a ligand contact to ATP. Aspartate 52 is a Mg(2+) binding site. Arginine 140 contributes to the deamido-NAD(+) binding site. Threonine 160 serves as a coordination point for ATP. Glutamate 165 lines the Mg(2+) pocket. Positions 173 and 180 each coordinate deamido-NAD(+). 2 residues coordinate ATP: lysine 189 and threonine 211. A deamido-NAD(+)-binding site is contributed by 260-261 (HK).

It belongs to the NAD synthetase family. In terms of assembly, homodimer.

The catalysed reaction is deamido-NAD(+) + NH4(+) + ATP = AMP + diphosphate + NAD(+) + H(+). Its pathway is cofactor biosynthesis; NAD(+) biosynthesis; NAD(+) from deamido-NAD(+) (ammonia route): step 1/1. Catalyzes the ATP-dependent amidation of deamido-NAD to form NAD. Uses ammonia as a nitrogen source. This is NH(3)-dependent NAD(+) synthetase from Lysinibacillus sphaericus (strain C3-41).